The sequence spans 267 residues: RWD domain-containing protein 3 (267 aa).

The RWD domain occupies 7–114; the sequence is QELSALAAIF…LWTQQNLRHI (108 aa). 2 interaction with UBE2I/UBC9 regions span residues 13-15 and 100-102; these read AAI and VHE.

As to quaternary structure, interacts with UBE2I/UBC9, NFKBIA, HIF1A and NCOA2.

The protein resides in the nucleus. It is found in the cytoplasm. In terms of biological role, enhancer of SUMO conjugation. Via its interaction with UBE2I/UBC9, increases SUMO conjugation to proteins by promoting the binding of E1 and E2 enzymes, thioester linkage between SUMO and UBE2I/UBC9 and transfer of SUMO to specific target proteins which include HIF1A, PIAS, NFKBIA, NR3C1 and TOP1. Positively regulates the NF-kappa-B signaling pathway by enhancing the sumoylation of NF-kappa-B inhibitor alpha (NFKBIA), promoting its stabilization which consequently leads to an increased inhibition of NF-kappa-B transcriptional activity. Negatively regulates the hypoxia-inducible factor-1 alpha (HIF1A) signaling pathway by increasing the sumoylation of HIF1A, promoting its stabilization, transcriptional activity and the expression of its target gene VEGFA during hypoxia. Has no effect on ubiquitination. The protein is RWD domain-containing protein 3 (Rwdd3) of Rattus norvegicus (Rat).